Consider the following 295-residue polypeptide: MQSDSAPLPRVEYVFETSKFRMTSRANEARLRLTNECPILVRPHEPFIMPTGIHFTRTPSCAFILTGETDKDVFCHTGLIDGGYRGEIQVILLNKRKYPVTLYRGELNICLSAFNYVLPPLRDVSFLTPPMYANDAGFDVMVMHSMVIPPTTDQPFMIYLGVETPGPPEPHVALALGRSGLASRGIVIDVSEWGPRGLQLKFYNYSGQPWLAQPGSRICQIVFVERRHILKGFKKCLRHRKLAPGVRFREARVHFREDTNSVRKHTHEDNPVHEPNVATASADIRGTKGLGSSGF.

178 to 180 contacts substrate; that stretch reads RSG. A compositionally biased stretch (basic and acidic residues) spans 260 to 272; sequence NSVRKHTHEDNPV. The interval 260–295 is disordered; the sequence is NSVRKHTHEDNPVHEPNVATASADIRGTKGLGSSGF.

This sequence belongs to the dUTPase family. Requires Mg(2+) as cofactor.

It catalyses the reaction dUTP + H2O = dUMP + diphosphate + H(+). In terms of biological role, involved in nucleotide metabolism: produces dUMP, the immediate precursor of thymidine nucleotides and decreases the intracellular concentration of dUTP to avoid uracil incorporation into viral DNA. This chain is Deoxyuridine 5'-triphosphate nucleotidohydrolase, found in Human herpesvirus 8 type P (isolate GK18) (HHV-8).